The sequence spans 251 residues: Ditrans,polycis-undecaprenyl-diphosphate synthase ((2E,6E)-farnesyl-diphosphate specific) (251 aa).

D20 is a catalytic residue. D20 is a binding site for Mg(2+). Substrate-binding positions include 21 to 24 (GNGR), W25, R33, H37, and 65 to 67 (SSE). Catalysis depends on N68, which acts as the Proton acceptor. Substrate-binding positions include W69, R71, R188, and 194-196 (RIS). E207 contacts Mg(2+).

It belongs to the UPP synthase family. As to quaternary structure, homodimer. Requires Mg(2+) as cofactor.

The catalysed reaction is 8 isopentenyl diphosphate + (2E,6E)-farnesyl diphosphate = di-trans,octa-cis-undecaprenyl diphosphate + 8 diphosphate. In terms of biological role, catalyzes the sequential condensation of isopentenyl diphosphate (IPP) with (2E,6E)-farnesyl diphosphate (E,E-FPP) to yield (2Z,6Z,10Z,14Z,18Z,22Z,26Z,30Z,34E,38E)-undecaprenyl diphosphate (di-trans,octa-cis-UPP). UPP is the precursor of glycosyl carrier lipid in the biosynthesis of bacterial cell wall polysaccharide components such as peptidoglycan and lipopolysaccharide. In Vibrio vulnificus (strain CMCP6), this protein is Ditrans,polycis-undecaprenyl-diphosphate synthase ((2E,6E)-farnesyl-diphosphate specific).